A 200-amino-acid chain; its full sequence is Probable nicotinate-nucleotide adenylyltransferase (200 aa).

It belongs to the NadD family.

The enzyme catalyses nicotinate beta-D-ribonucleotide + ATP + H(+) = deamido-NAD(+) + diphosphate. It functions in the pathway cofactor biosynthesis; NAD(+) biosynthesis; deamido-NAD(+) from nicotinate D-ribonucleotide: step 1/1. Its function is as follows. Catalyzes the reversible adenylation of nicotinate mononucleotide (NaMN) to nicotinic acid adenine dinucleotide (NaAD). This Lachnoclostridium phytofermentans (strain ATCC 700394 / DSM 18823 / ISDg) (Clostridium phytofermentans) protein is Probable nicotinate-nucleotide adenylyltransferase.